Here is a 334-residue protein sequence, read N- to C-terminus: Deoxyhypusine synthase (334 aa).

NAD(+)-binding positions include 73 to 77 (SNIIS), 99 to 101 (TGG), glutamate 105, and aspartate 207. 104–105 (EE) provides a ligand contact to spermidine. Spermidine is bound by residues aspartate 212 and histidine 256. 276 to 277 (NA) provides a ligand contact to NAD(+). Residues 282–284 (GSD) and 291–297 (EAVSWGK) contribute to the spermidine site. The active-site Nucleophile is the lysine 297. Position 310 to 311 (310 to 311 (DA)) interacts with NAD(+).

The protein belongs to the deoxyhypusine synthase family. It depends on NAD(+) as a cofactor.

The enzyme catalyses [eIF5A protein]-L-lysine + spermidine = [eIF5A protein]-deoxyhypusine + propane-1,3-diamine. The protein operates within protein modification; eIF5A hypusination. Catalyzes the NAD-dependent oxidative cleavage of spermidine and the subsequent transfer of the butylamine moiety of spermidine to the epsilon-amino group of a specific lysine residue of the eIF-5A precursor protein to form the intermediate deoxyhypusine residue. This is Deoxyhypusine synthase (DYS1) from Encephalitozoon cuniculi (strain GB-M1) (Microsporidian parasite).